A 364-amino-acid polypeptide reads, in one-letter code: Alanine racemase (364 aa).

The active-site Proton acceptor; specific for D-alanine is the Lys34. Residue Lys34 is modified to N6-(pyridoxal phosphate)lysine. Position 129 (Arg129) interacts with substrate. The active-site Proton acceptor; specific for L-alanine is Tyr259. Substrate is bound at residue Met307.

This sequence belongs to the alanine racemase family. Pyridoxal 5'-phosphate serves as cofactor.

The catalysed reaction is L-alanine = D-alanine. Its pathway is amino-acid biosynthesis; D-alanine biosynthesis; D-alanine from L-alanine: step 1/1. Catalyzes the interconversion of L-alanine and D-alanine. May also act on other amino acids. This chain is Alanine racemase (alr), found in Coxiella burnetii (strain CbuK_Q154) (Coxiella burnetii (strain Q154)).